A 192-amino-acid chain; its full sequence is MAAIPVDDCINFVGMKFIDNTLYFVADSDENLETDYFGKLEHKLSILRNLNDQVLFINQGDQPVFEDMPDSDCTDNAPRTEFIIYMYKDSLTRGLAVTISVNYKTMSTLSCENKIISFKEMSPPESINDEGNDIIFFQRSVPGHDDKIQFESSLYKGYFLACEKEKDLFKLILKKKDENGDKSIMFTVQNKN.

Positions 1-35 are excised as a propeptide; that stretch reads MAAIPVDDCINFVGMKFIDNTLYFVADSDENLETD.

It belongs to the IL-1 family. Forms a ternary complex with ligand-binding receptor subunit IL18R1 and signaling receptor subunit IL18RAP at the plasma membrane. Mature IL18 first binds to IL18R1 forming a low affinity binary complex, which then interacts with IL18RAP to form a high affinity ternary complex that signals inside the cell. Interacts with cargo receptor TMED10; the interaction mediates the translocation from the cytoplasm into the ERGIC (endoplasmic reticulum-Golgi intermediate compartment) and thereby secretion. The pro-IL-18 precursor is processed by CASP1, CASP4 or CASP5 to yield its mature, active form. The pro-IL-18 precursor features autoinhibitory interactions between the propeptide and the post-cleavage-site region, preventing recognition by the IL18R1 receptor. Processing by CASP1, CASP4 or CASP5 induces conformational changes to generate critical receptor-binding sites. The mature form is then secreted and released in the extracellular milieu by passing through the gasdermin-D (GSDMD) pore. In contrast, cleavage by CASP3 inactivates IL18.

It localises to the cytoplasm. Its subcellular location is the cytosol. The protein localises to the secreted. Functionally, pro-inflammatory cytokine primarily involved in epithelial barrier repair, polarized T-helper 1 (Th1) cell and natural killer (NK) cell immune responses. Upon binding to IL18R1 and IL18RAP, forms a signaling ternary complex which activates NF-kappa-B, triggering synthesis of inflammatory mediators. Synergizes with IL12/interleukin-12 to induce IFNG synthesis from T-helper 1 (Th1) cells and natural killer (NK) cells. Involved in transduction of inflammation downstream of pyroptosis: its mature form is specifically released in the extracellular milieu by passing through the gasdermin-D (GSDMD) pore. The protein is Interleukin-18 (IL18) of Felis catus (Cat).